A 181-amino-acid chain; its full sequence is dTDP-4-dehydrorhamnose 3,5-epimerase (181 aa).

Residues R23, E28, 47 to 49 (QDN), and R59 each bind substrate. Catalysis depends on H62, which acts as the Proton acceptor. Substrate-binding residues include K72 and H119. Y132 (proton donor) is an active-site residue. Residues E143 and K167 each contribute to the substrate site.

Belongs to the dTDP-4-dehydrorhamnose 3,5-epimerase family. In terms of assembly, homodimer.

The catalysed reaction is dTDP-4-dehydro-6-deoxy-alpha-D-glucose = dTDP-4-dehydro-beta-L-rhamnose. Its pathway is carbohydrate biosynthesis; dTDP-L-rhamnose biosynthesis. The protein operates within bacterial outer membrane biogenesis; LPS O-antigen biosynthesis. Catalyzes the epimerization of the C3' and C5'positions of dTDP-6-deoxy-D-xylo-4-hexulose, forming dTDP-6-deoxy-L-lyxo-4-hexulose. The polypeptide is dTDP-4-dehydrorhamnose 3,5-epimerase (rfbC) (Shigella flexneri).